The following is a 335-amino-acid chain: DNA-directed RNA polymerase subunit alpha (335 aa).

The alpha N-terminal domain (alpha-NTD) stretch occupies residues 1 to 233 (MVREKITVST…DLFIPFLHME (233 aa)). Residues 265–335 (KEIALKSIFI…KQLVIFLPKK (71 aa)) form an alpha C-terminal domain (alpha-CTD) region.

It belongs to the RNA polymerase alpha chain family. As to quaternary structure, in plastids the minimal PEP RNA polymerase catalytic core is composed of four subunits: alpha, beta, beta', and beta''. When a (nuclear-encoded) sigma factor is associated with the core the holoenzyme is formed, which can initiate transcription.

It is found in the plastid. The protein resides in the chloroplast. It carries out the reaction RNA(n) + a ribonucleoside 5'-triphosphate = RNA(n+1) + diphosphate. In terms of biological role, DNA-dependent RNA polymerase catalyzes the transcription of DNA into RNA using the four ribonucleoside triphosphates as substrates. The sequence is that of DNA-directed RNA polymerase subunit alpha from Coffea arabica (Arabian coffee).